We begin with the raw amino-acid sequence, 263 residues long: MILLLDVGNTRIKWRVVQAAGTPAMAEGALGHAEVHGLQAIVAGFPALRRMVGSNVAGASLGAALDGMLTTAGIAGRWVQAARDEHGVRNGYDRPAQLGTDRWAALIGARRLHGGPCLVVSAGTATTVDHLDADGQFQGGLILPGIDLMRQSLASNTSGLRLEDGHVTPHPRNTADAIESGCAMAQAGAVERMFAQLVPQEDALCVLTGGAAPRFADLLSVRTHPVPNLVLDGLAVIAAADAADSCPPHPTGTRAWPGDGRIR.

An ATP-binding site is contributed by 6-13 (DVGNTRIK). Residues Y92 and 99–102 (GTDR) each bind substrate. Residue D101 is the Proton acceptor of the active site. T124 lines the ATP pocket. T174 provides a ligand contact to substrate.

It belongs to the type III pantothenate kinase family. As to quaternary structure, homodimer. The cofactor is NH4(+). It depends on K(+) as a cofactor.

Its subcellular location is the cytoplasm. It carries out the reaction (R)-pantothenate + ATP = (R)-4'-phosphopantothenate + ADP + H(+). It participates in cofactor biosynthesis; coenzyme A biosynthesis; CoA from (R)-pantothenate: step 1/5. In terms of biological role, catalyzes the phosphorylation of pantothenate (Pan), the first step in CoA biosynthesis. The polypeptide is Type III pantothenate kinase (Azoarcus sp. (strain BH72)).